We begin with the raw amino-acid sequence, 235 residues long: MRRSMKRRRRRRPVAPATAARGGDFRAEDGAGLEAREEKVVYSRSQLSLADSTKALGDAFKLFMPRSTEFMSSDAELWSFLCSLKHQFSPHILRSKDVYGYSSCRALVPDPPGPPTARGQARRPVPRAAARRRRRGARAAAARRRKPRPPPPPPPPPEESCPAKPVAPGPCFGGRTLEEIWRAATPTLTTFPTIRVGSDVWGERSLAAARRRARQVLRVNLEPMVRLRRFPVPRA.

Basic residues predominate over residues 1-13 (MRRSMKRRRRRRP). The tract at residues 1–30 (MRRSMKRRRRRRPVAPATAARGGDFRAEDG) is disordered. Phosphoserine occurs at positions 52 and 89. The tract at residues 109–167 (PDPPGPPTARGQARRPVPRAAARRRRRGARAAAARRRKPRPPPPPPPPPEESCPAKPVA) is disordered. Over residues 120-148 (QARRPVPRAAARRRRRGARAAAARRRKPR) the composition is skewed to basic residues. Residues 149 to 159 (PPPPPPPPPEE) are compositionally biased toward pro residues. Residue threonine 185 is modified to Phosphothreonine. The residue at position 198 (serine 198) is a Phosphoserine.

The protein is Coiled-coil domain-containing protein 71L (CCDC71L) of Homo sapiens (Human).